Consider the following 466-residue polypeptide: Integrator complex subunit 12 (466 aa).

The segment at 41 to 101 is disordered; sequence KGNDSVYRPQ…EAEKRSADKM (61 aa). Residues 69–84 are compositionally biased toward low complexity; it reads KASSSTPSSSMLSKPL. Over residues 85–101 the composition is skewed to basic and acidic residues; it reads TSEKLKKEAEKRSADKM. The PHD-type zinc finger occupies 156-212; it reads GLACVVCRQMTVFSGNQLVECQECHNLYHQDCHKPQVTDKDVNDPRLVWYCARCTRQ. Disordered stretches follow at residues 216-251 and 311-466; these read MAQK…ELKA and GTSS…KLKK. Composition is skewed to polar residues over residues 218–233 and 311–329; these read QKNQ…SAVS and GTSS…SVQK. Low complexity predominate over residues 338 to 373; sequence PSKPGSVSKSGSGGSSSSSTIPIKPLPPLILGKTGL. The span at 374–386 shows a compositional bias: polar residues; the sequence is SRSMSSDNVSKTG. Low complexity predominate over residues 392–423; it reads PSSAGSVSSLSSQLGSNNGSSSAAGSNVTSSN. Residues 453–466 are compositionally biased toward basic residues; sequence QMVKKKAAQKKLKK.

The protein belongs to the Integrator subunit 12 family. As to quaternary structure, component of the Integrator complex, composed of core subunits INTS1, INTS2, INTS3, INTS4, INTS5, INTS6, INTS7, INTS8, INTS9/RC74, INTS10, INTS11/CPSF3L, INTS12, INTS13, INTS14 and INTS15. The core complex associates with protein phosphatase 2A subunits PPP2CA and PPP2R1A, to form the Integrator-PP2A (INTAC) complex.

The protein resides in the nucleus. Component of the integrator complex, a multiprotein complex that terminates RNA polymerase II (Pol II) transcription in the promoter-proximal region of genes. The integrator complex provides a quality checkpoint during transcription elongation by driving premature transcription termination of transcripts that are unfavorably configured for transcriptional elongation: the complex terminates transcription by (1) catalyzing dephosphorylation of the C-terminal domain (CTD) of Pol II subunit POLR2A/RPB1 and SUPT5H/SPT5, (2) degrading the exiting nascent RNA transcript via endonuclease activity and (3) promoting the release of Pol II from bound DNA. The integrator complex is also involved in terminating the synthesis of non-coding Pol II transcripts, such as enhancer RNAs (eRNAs), small nuclear RNAs (snRNAs), telomerase RNAs and long non-coding RNAs (lncRNAs). In Xenopus tropicalis (Western clawed frog), this protein is Integrator complex subunit 12 (ints12).